The primary structure comprises 892 residues: DNA ligase (892 aa).

Residues M1–G23 form a disordered region. Residues D99–D103, S148–L149, and E182 contribute to the NAD(+) site. The active-site N6-AMP-lysine intermediate is K184. Residues R205, E244, K369, and K393 each contribute to the NAD(+) site. Zn(2+) contacts are provided by C490, C493, C509, and C515. The BRCT domain maps to G810–E892.

The protein belongs to the NAD-dependent DNA ligase family. LigA subfamily. Mg(2+) serves as cofactor. The cofactor is Mn(2+).

The enzyme catalyses NAD(+) + (deoxyribonucleotide)n-3'-hydroxyl + 5'-phospho-(deoxyribonucleotide)m = (deoxyribonucleotide)n+m + AMP + beta-nicotinamide D-nucleotide.. Its function is as follows. DNA ligase that catalyzes the formation of phosphodiester linkages between 5'-phosphoryl and 3'-hydroxyl groups in double-stranded DNA using NAD as a coenzyme and as the energy source for the reaction. It is essential for DNA replication and repair of damaged DNA. The polypeptide is DNA ligase (Bifidobacterium adolescentis (strain ATCC 15703 / DSM 20083 / NCTC 11814 / E194a)).